We begin with the raw amino-acid sequence, 239 residues long: Sugar fermentation stimulation protein homolog (239 aa).

It belongs to the SfsA family.

The sequence is that of Sugar fermentation stimulation protein homolog from Alcanivorax borkumensis (strain ATCC 700651 / DSM 11573 / NCIMB 13689 / SK2).